The sequence spans 343 residues: Dihydroorotate dehydrogenase (quinone) (343 aa).

Residues 61–65 (AGLDK) and threonine 85 each bind FMN. Substrate is bound at residue lysine 65. 110-114 (NRMGF) lines the substrate pocket. FMN is bound by residues asparagine 138 and asparagine 171. Substrate is bound at residue asparagine 171. Residue serine 174 is the Nucleophile of the active site. Asparagine 176 lines the substrate pocket. FMN-binding residues include lysine 216 and threonine 244. 245–246 (NT) is a binding site for substrate. FMN-binding positions include glycine 267, glycine 296, and 317–318 (YS).

It belongs to the dihydroorotate dehydrogenase family. Type 2 subfamily. Monomer. Requires FMN as cofactor.

The protein resides in the cell membrane. It carries out the reaction (S)-dihydroorotate + a quinone = orotate + a quinol. It participates in pyrimidine metabolism; UMP biosynthesis via de novo pathway; orotate from (S)-dihydroorotate (quinone route): step 1/1. Functionally, catalyzes the conversion of dihydroorotate to orotate with quinone as electron acceptor. The chain is Dihydroorotate dehydrogenase (quinone) from Pseudomonas syringae pv. syringae (strain B728a).